A 242-amino-acid chain; its full sequence is Orotidine 5'-phosphate decarboxylase (242 aa).

Substrate-binding positions include Asp-21, Lys-43, 71 to 80 (DLKFFDVPET), Thr-124, Arg-185, Gln-195, Gly-215, and Arg-216. The active-site Proton donor is Lys-73.

Belongs to the OMP decarboxylase family. Type 1 subfamily. In terms of assembly, homodimer.

The enzyme catalyses orotidine 5'-phosphate + H(+) = UMP + CO2. The protein operates within pyrimidine metabolism; UMP biosynthesis via de novo pathway; UMP from orotate: step 2/2. Its function is as follows. Catalyzes the decarboxylation of orotidine 5'-monophosphate (OMP) to uridine 5'-monophosphate (UMP). The sequence is that of Orotidine 5'-phosphate decarboxylase from Methylococcus capsulatus (strain ATCC 33009 / NCIMB 11132 / Bath).